The following is a 114-amino-acid chain: MVKTFQAYLPSTNRTYSCVHCRAHLASHDELISKSFQGSQGPAYLFNSVVNVACGQTEERVLLTGLHAVADIYCECCKTPLGWKYEHAYESSQKYKEGKFIIELAHMIKENGWD.

The 98-residue stretch at 14 to 111 (RTYSCVHCRA…IELAHMIKEN (98 aa)) folds into the Yippee domain. 4 residues coordinate Zn(2+): Cys18, Cys21, Cys74, and Cys77.

It belongs to the yippee family.

Functionally, involved in regulating synaptic transmission in presynaptic neurons. In class IV dendritic arborization neurons (nociceptors), involved in regulating activation of their second-order neurons (SONs) and maintaining synaptic contact between nociceptors and their SONs. The polypeptide is Protein yippee-like (Drosophila melanogaster (Fruit fly)).